The following is a 311-amino-acid chain: tRNA dimethylallyltransferase 2 (311 aa).

15–22 (GPTAVGKT) contacts ATP. 17–22 (TAVGKT) is a substrate binding site. The tract at residues 40–43 (DSMQ) is interaction with substrate tRNA.

The protein belongs to the IPP transferase family. In terms of assembly, monomer. It depends on Mg(2+) as a cofactor.

It catalyses the reaction adenosine(37) in tRNA + dimethylallyl diphosphate = N(6)-dimethylallyladenosine(37) in tRNA + diphosphate. In terms of biological role, catalyzes the transfer of a dimethylallyl group onto the adenine at position 37 in tRNAs that read codons beginning with uridine, leading to the formation of N6-(dimethylallyl)adenosine (i(6)A). The chain is tRNA dimethylallyltransferase 2 from Syntrophus aciditrophicus (strain SB).